A 546-amino-acid polypeptide reads, in one-letter code: Choline oxidase (546 aa).

Residues 23–24 (SA), Glu44, Trp71, 90–92 (AKV), 96–103 (CSSHNSCI), Ala232, and Tyr465 contribute to the FAD site. His99 bears the Tele-8alpha-FAD histidine mark. The active-site Proton acceptor is the His466. Residues Ala500 and 510-512 (NPN) each bind FAD.

It belongs to the GMC oxidoreductase family. As to quaternary structure, homodimer. Requires FAD as cofactor.

The enzyme catalyses choline + 2 O2 + H2O = glycine betaine + 2 H2O2 + H(+). It participates in amine and polyamine biosynthesis; betaine biosynthesis via choline pathway; betaine from choline: step 1/1. Functionally, catalyzes the two-step oxidative conversion of choline to glycine-betaine with betaine aldehyde as an intermediate. Glycine-betaine accumulates to high levels in the cytoplasm of cells to prevent dehydration and plasmolysis in adverse hyperosmotic environments. Accepts either choline or the reaction intermediate betaine-aldehyde as substrate. This Arthrobacter globiformis protein is Choline oxidase (codA).